An 896-amino-acid chain; its full sequence is Translation initiation factor IF-2 (896 aa).

Residues valine 93 to tryptophan 219 show a composition bias toward basic and acidic residues. Residues valine 93–lysine 307 form a disordered region. Residues glycine 256–asparagine 271 are compositionally biased toward basic residues. Residues lysine 272 to alanine 285 show a composition bias toward basic and acidic residues. Residues proline 395–lysine 564 form the tr-type G domain. The interval glycine 404 to threonine 411 is G1. GTP is bound at residue glycine 404 to threonine 411. The interval glycine 429–histidine 433 is G2. The interval aspartate 450–glycine 453 is G3. Residues aspartate 450–histidine 454 and asparagine 504–aspartate 507 each bind GTP. The segment at asparagine 504–aspartate 507 is G4. Positions serine 540–lysine 542 are G5.

It belongs to the TRAFAC class translation factor GTPase superfamily. Classic translation factor GTPase family. IF-2 subfamily.

The protein localises to the cytoplasm. In terms of biological role, one of the essential components for the initiation of protein synthesis. Protects formylmethionyl-tRNA from spontaneous hydrolysis and promotes its binding to the 30S ribosomal subunits. Also involved in the hydrolysis of GTP during the formation of the 70S ribosomal complex. This chain is Translation initiation factor IF-2, found in Klebsiella pneumoniae subsp. pneumoniae (strain ATCC 700721 / MGH 78578).